The primary structure comprises 304 residues: Protease HtpX homolog (304 aa).

2 helical membrane passes run phenylalanine 19–phenylalanine 39 and leucine 41–tyrosine 61. Histidine 146 serves as a coordination point for Zn(2+). Glutamate 147 is a catalytic residue. Histidine 150 provides a ligand contact to Zn(2+). A run of 2 helical transmembrane segments spans residues valine 156–leucine 176 and asparagine 192–leucine 212. Glutamate 221 is a Zn(2+) binding site.

This sequence belongs to the peptidase M48B family. It depends on Zn(2+) as a cofactor.

It localises to the cell inner membrane. The sequence is that of Protease HtpX homolog from Dictyoglomus turgidum (strain DSM 6724 / Z-1310).